Reading from the N-terminus, the 223-residue chain is Adenylate kinase 4, mitochondrial (223 aa).

Residue 15-20 (GSGKGT) participates in a ribonucleoside 5'-triphosphate binding. Residues 35 to 64 (SSGHFLRENIKANTEVGEMAKQYIEKSLLV) are NMP. AMP contacts are provided by Ser36 and Arg41. An N6-succinyllysine modification is found at Lys60. AMP contacts are provided by residues 62–64 (LLV), 89–92 (GFPR), and Gln96. The LID stretch occupies residues 125–162 (RRWIHPPSGRVYNLDFNPPHVHGIDDVTGEPLVQQEDD). Residues Arg126 and 135 to 136 (VY) each bind a ribonucleoside 5'-triphosphate. Arg170 is an AMP binding site. The residue at position 175 (Lys175) is an N6-acetyllysine. Residues Lys179 and Lys186 each carry the N6-acetyllysine; alternate modification. 2 positions are modified to N6-succinyllysine; alternate: Lys179 and Lys186. A ribonucleoside 5'-triphosphate is bound at residue Thr199.

It belongs to the adenylate kinase family. AK3 subfamily. Monomer. Interacts with SLC25A5/ANT2.

The protein localises to the mitochondrion matrix. The catalysed reaction is a ribonucleoside 5'-phosphate + ATP = a ribonucleoside 5'-diphosphate + ADP. The enzyme catalyses AMP + ATP = 2 ADP. It catalyses the reaction GTP + AMP = GDP + ADP. It carries out the reaction CMP + ATP = CDP + ADP. The catalysed reaction is GTP + CMP = CDP + GDP. The enzyme catalyses dAMP + ATP = dADP + ADP. It catalyses the reaction dCMP + ATP = dCDP + ADP. It carries out the reaction a 2'-deoxyribonucleoside 5'-diphosphate + ATP = a 2'-deoxyribonucleoside 5'-triphosphate + ADP. The catalysed reaction is a ribonucleoside 5'-diphosphate + ATP = a ribonucleoside 5'-triphosphate + ADP. The enzyme catalyses GDP + ATP = GTP + ADP. It catalyses the reaction CDP + GTP = CTP + GDP. It carries out the reaction CDP + ATP = CTP + ADP. The catalysed reaction is UDP + ATP = UTP + ADP. The enzyme catalyses GTP + UDP = UTP + GDP. It catalyses the reaction dADP + GTP = dATP + GDP. It carries out the reaction dCDP + GTP = dCTP + GDP. The catalysed reaction is dCDP + ATP = dCTP + ADP. The enzyme catalyses dGDP + ATP = dGTP + ADP. It catalyses the reaction dTDP + GTP = dTTP + GDP. It carries out the reaction dTDP + ATP = dTTP + ADP. Broad-specificity mitochondrial nucleoside phosphate kinase involved in cellular nucleotide homeostasis by catalyzing nucleoside-phosphate interconversions. Similar to other adenylate kinases, preferentially catalyzes the phosphorylation of the nucleoside monophosphate AMP with ATP as phosphate donor to produce ADP. Phosphorylates only AMP when using GTP as phosphate donor. In vitro, can also catalyze the phosphorylation of CMP, dAMP and dCMP and use GTP as an alternate phosphate donor. Moreover, exhibits a diphosphate kinase activity, producing ATP, CTP, GTP, UTP, TTP, dATP, dCTP and dGTP from the corresponding diphosphate substrates with either ATP or GTP as phosphate donors. Plays a role in controlling cellular ATP levels by regulating phosphorylation and activation of the energy sensor protein kinase AMPK. Plays a protective role in the cellular response to oxidative stress. This chain is Adenylate kinase 4, mitochondrial, found in Pongo abelii (Sumatran orangutan).